Reading from the N-terminus, the 120-residue chain is SPbeta prophage-derived uncharacterized protein YosG (120 aa).

The sequence is that of SPbeta prophage-derived uncharacterized protein YosG (yosG) from Bacillus subtilis (strain 168).